Here is a 1510-residue protein sequence, read N- to C-terminus: MSDVFELENEIELESDEVIMENENVEEIVDAPIPFSMTTNNGVERGKFRSLTLINWNGFFARTFDLDELVTTLSGGNGAGKSTTMAGFVTALIPDLTLLHFRNTTEAGSTGGSRDKGLHGKLRPGVCYAVLDTINSRHQRILVGVRLQQIAGRDKKVDLKTFSIQGVELSQNPTALFTETVGERQARVLNLNELKDKIENIGAQFKQYHSITDYHGMMFDLGIIPKRLRSASDRSKFYKLIEASLYGGISSAITRSLRDYLLPENLGVRKAFQDMESALRENRMTLEAIKVTQSDRDLFKHLITETTNYVASDYMRNANERRGNIEAALESRREWYKAKAEQNLSQHRLVDLSREAAELAENERTLEVDHQSAVDHLNLVLNALRHQEKITRYQEDIAELTERLEEQKMVVEDANDALEESQAQFEQTEIEIDAVRAQLADYQKALDAQQTRALQYQQAIAALEKAKTLCGLADLSVKNVEDYHAEFEAHAESLTETVLELEHKMSISEAAKSQFDKAYQLVCKIAGEMPRSAAWESAKELLREYPSQKLQAQQTPQLRTKLHELEQRYAQQQSAVKLLNDFNQRTNLSLQTAEELEDYHAEQEALIEDISAGLSEQVENRSTLRQKRENLTALYDENARKAPAWLTAQAALERLEQQSGETFEHSQDVMNFMQSQLVKERELTMQRDQLEQKRLQLDEQISRLSQPDGSEDPRLNMLAERFGGVLLSELYDDVTIEDAPYFSALYGPSRHAIVVRDLNAVREQLAQLEDCPDDLYLIEGDPTAFDDSVLSAQELELGVVVQVSDRELRYSRFPEIPLFGSAAREKRLEELQIERDEVAEQHAQIAFDVQKYQRLHEHFSQFVGLHLALAFQPNPEALMSEINRERNEIDRELNQFNNGEQQLRIQLDNAKEKLQLLNKLIPQLNVLADEDLIDRIEECREQLDIAEQDEYFIRQYGVTLSQLEPIANSLQSDPENYEGLKNELTQAIERQKQVQQRVFALADVVQRKPHFGYEDAGQAETSELNEKLRQRLEQMQAQRDTQREQVRQKQSQFAEYNRVLIQLQSSYDSKYQLLNELIGEISDLGVRADDGAEERARIRRDELHQQLSTSRQRRSYVEKQLTLIESEADNLNRLIRKTERDYKTQRELVVAAKVSWCVVLRLSRNSDMEKRLNRRELAYLSADELRSMSDKALGALRTAVADNEYLRDSLRVSEDSRKPENKVRFFIAVYQHLRERIRQDIIKTDDPIDAIEQMEIELSRLTAELTGREKKLAISSESVANIMRKTIQREQNRIRMLNQGLQNIAFGQVKSVRLVVNIRDTHAMLLDALSGQQNEYQDLFNDNRITFSEAMAKLYQRINPHIDMGQRTAQTIGEELLDYRNYLELEVEVFRGADGWLRAESGALSTGEAIGTGMSILLMVVQSWEEESRRIRGKDIVPCRLLFLDEAARLDGKSISTLFELCERLDMQLLIAAPENISPEKGTTYKLVRKIAGNQEHVHVVGLRGFGATE.

A coiled-coil region spans residues 6–30; sequence ELENEIELESDEVIMENENVEEIVD. 75–82 provides a ligand contact to ATP; sequence GGNGAGKS. Coiled coils occupy residues 346–506, 553–611, 673–706, 821–846, 876–1064, 1094–1149, and 1249–1304; these read QHRL…HKMS, QQTP…EDIS, MQSQ…RLSQ, SAAR…AQIA, EALM…IQLQ, ERAR…RELV, and DAIE…LQNI. Residues 707 to 824 are flexible hinge; sequence PDGSEDPRLN…EIPLFGSAAR (118 aa).

Belongs to the SMC family. MukB subfamily. In terms of assembly, homodimerization via its hinge domain. Binds to DNA via its C-terminal region. Interacts, and probably forms a ternary complex, with MukE and MukF via its C-terminal region. The complex formation is stimulated by calcium or magnesium. Interacts with tubulin-related protein FtsZ.

The protein localises to the cytoplasm. It is found in the nucleoid. Plays a central role in chromosome condensation, segregation and cell cycle progression. Functions as a homodimer, which is essential for chromosome partition. Involved in negative DNA supercoiling in vivo, and by this means organize and compact chromosomes. May achieve or facilitate chromosome segregation by condensation DNA from both sides of a centrally located replisome during cell division. This Haemophilus influenzae (strain PittGG) protein is Chromosome partition protein MukB.